Consider the following 202-residue polypeptide: Glycerol-3-phosphate acyltransferase (202 aa).

Transmembrane regions (helical) follow at residues 3–23 (NLII…LILA), 61–81 (IATI…LKFL), 87–107 (LLWS…YLLF), 118–138 (GAMI…WVVI), 144–164 (ISSL…FIFN), and 167–187 (LEIH…YKHL).

The protein belongs to the PlsY family. Probably interacts with PlsX.

The protein resides in the cell inner membrane. It catalyses the reaction an acyl phosphate + sn-glycerol 3-phosphate = a 1-acyl-sn-glycero-3-phosphate + phosphate. It participates in lipid metabolism; phospholipid metabolism. Its function is as follows. Catalyzes the transfer of an acyl group from acyl-phosphate (acyl-PO(4)) to glycerol-3-phosphate (G3P) to form lysophosphatidic acid (LPA). This enzyme utilizes acyl-phosphate as fatty acyl donor, but not acyl-CoA or acyl-ACP. The polypeptide is Glycerol-3-phosphate acyltransferase (Campylobacter jejuni subsp. jejuni serotype O:23/36 (strain 81-176)).